Reading from the N-terminus, the 405-residue chain is Phosphoglycerate kinase (405 aa).

Substrate contacts are provided by residues 24 to 26 (DFN), Arg40, 63 to 66 (HLGR), Arg122, and Arg162. Residues Lys212, Glu331, and 361–364 (GGDS) contribute to the ATP site.

The protein belongs to the phosphoglycerate kinase family. Monomer.

Its subcellular location is the cytoplasm. The enzyme catalyses (2R)-3-phosphoglycerate + ATP = (2R)-3-phospho-glyceroyl phosphate + ADP. Its pathway is carbohydrate degradation; glycolysis; pyruvate from D-glyceraldehyde 3-phosphate: step 2/5. This is Phosphoglycerate kinase from Corynebacterium aurimucosum (strain ATCC 700975 / DSM 44827 / CIP 107346 / CN-1) (Corynebacterium nigricans).